The following is a 266-amino-acid chain: Putative [LysW]-aminoadipate/[LysW]-glutamate kinase (266 aa).

Substrate-binding positions include 36-37, Arg63, and Asn168; that span reads GG.

Belongs to the acetylglutamate kinase family. LysZ subfamily.

The protein localises to the cytoplasm. It catalyses the reaction [amino-group carrier protein]-C-terminal-N-(1,4-dicarboxybutan-1-yl)-L-glutamine + ATP = [amino-group carrier protein]-C-terminal-N-(1-carboxy-5-phosphooxy-5-oxopentan-1-yl)-L-glutamine + ADP. It carries out the reaction [amino-group carrier protein]-C-terminal-gamma-(L-glutamyl)-L-glutamate + ATP = [amino-group carrier protein]-C-terminal-gamma-(5-phospho-L-glutamyl)-L-glutamate + ADP. Its pathway is amino-acid biosynthesis; L-lysine biosynthesis via AAA pathway; L-lysine from L-alpha-aminoadipate (Thermus route): step 2/5. It participates in amino-acid biosynthesis; L-arginine biosynthesis. In terms of biological role, involved in both the arginine and lysine biosynthetic pathways. Phosphorylates the LysW-bound precursors glutamate (for arginine biosynthesis), respectively alpha-aminoadipate (for lysine biosynthesis). The protein is Putative [LysW]-aminoadipate/[LysW]-glutamate kinase of Cenarchaeum symbiosum (strain A).